The following is a 491-amino-acid chain: Aspartyl/glutamyl-tRNA(Asn/Gln) amidotransferase subunit B (491 aa).

The protein belongs to the GatB/GatE family. GatB subfamily. In terms of assembly, heterotrimer of A, B and C subunits.

The catalysed reaction is L-glutamyl-tRNA(Gln) + L-glutamine + ATP + H2O = L-glutaminyl-tRNA(Gln) + L-glutamate + ADP + phosphate + H(+). The enzyme catalyses L-aspartyl-tRNA(Asn) + L-glutamine + ATP + H2O = L-asparaginyl-tRNA(Asn) + L-glutamate + ADP + phosphate + 2 H(+). Allows the formation of correctly charged Asn-tRNA(Asn) or Gln-tRNA(Gln) through the transamidation of misacylated Asp-tRNA(Asn) or Glu-tRNA(Gln) in organisms which lack either or both of asparaginyl-tRNA or glutaminyl-tRNA synthetases. The reaction takes place in the presence of glutamine and ATP through an activated phospho-Asp-tRNA(Asn) or phospho-Glu-tRNA(Gln). This is Aspartyl/glutamyl-tRNA(Asn/Gln) amidotransferase subunit B from Nostoc punctiforme (strain ATCC 29133 / PCC 73102).